Consider the following 87-residue polypeptide: MTIKKFLPLLLSSLMVYSLILLPIISGKSPVSCDGACTSTPQCNKICTSKGYKKGICHGSAHLFYICCCYAKFESQYDPSISSPPNY.

Positions methionine 1–glycine 27 are cleaved as a signal peptide. 4 disulfides stabilise this stretch: cysteine 33–cysteine 69, cysteine 37–cysteine 57, cysteine 43–cysteine 67, and cysteine 47–cysteine 68.

The protein belongs to the DEFL family.

The protein localises to the secreted. This Arabidopsis thaliana (Mouse-ear cress) protein is Defensin-like protein 81.